Consider the following 388-residue polypeptide: Lipid-A-disaccharide synthase (388 aa).

The protein belongs to the LpxB family.

It catalyses the reaction a lipid X + a UDP-2-N,3-O-bis[(3R)-3-hydroxyacyl]-alpha-D-glucosamine = a lipid A disaccharide + UDP + H(+). The protein operates within bacterial outer membrane biogenesis; LPS lipid A biosynthesis. Its function is as follows. Condensation of UDP-2,3-diacylglucosamine and 2,3-diacylglucosamine-1-phosphate to form lipid A disaccharide, a precursor of lipid A, a phosphorylated glycolipid that anchors the lipopolysaccharide to the outer membrane of the cell. The protein is Lipid-A-disaccharide synthase of Sulfurihydrogenibium sp. (strain YO3AOP1).